The sequence spans 630 residues: Cyclin-T1-2 (630 aa).

Low complexity predominate over residues Gln288–Ser297. Disordered stretches follow at residues Gln288–Gln313 and Arg410–Pro439. A compositionally biased stretch (polar residues) spans Gly421 to Pro439.

This sequence belongs to the cyclin family. Cyclin T subfamily.

The polypeptide is Cyclin-T1-2 (CYCT1_2) (Oryza sativa subsp. japonica (Rice)).